A 326-amino-acid chain; its full sequence is Undecaprenyl-diphosphatase (326 aa).

9 consecutive transmembrane segments (helical) span residues 11-31, 42-62, 90-110, 138-158, 165-185, 212-232, 242-262, 272-292, and 304-324; these read AFSLSVAIAVVYHQAWGIAVA, TGVISNGISINLFQAFVLGFI, GVAFTAVIQLGSIGAVFWYFW, LGIGLGTIPIVFFGLLMKLLV, FFRSLSTIAIASIVMALLLAL, ALALIPGVSRSGSTLTAGLFI, FSFLLGIPAITIAGLVELKGL, ILPLIVGTISSAVFSYLAIAW, and IFVWYRLIFGVVILTALGMGF.

This sequence belongs to the UppP family.

The protein localises to the cell inner membrane. The enzyme catalyses di-trans,octa-cis-undecaprenyl diphosphate + H2O = di-trans,octa-cis-undecaprenyl phosphate + phosphate + H(+). Functionally, catalyzes the dephosphorylation of undecaprenyl diphosphate (UPP). Confers resistance to bacitracin. This is Undecaprenyl-diphosphatase from Synechocystis sp. (strain ATCC 27184 / PCC 6803 / Kazusa).